Reading from the N-terminus, the 510-residue chain is Ankyrin repeat domain-containing protein 13C-A (510 aa).

Residues M1 to E19 are compositionally biased toward basic and acidic residues. Residues M1–T35 are disordered. 3 ANK repeats span residues D80 to S111, H112 to V141, and Q145 to R174.

Its subcellular location is the endoplasmic reticulum membrane. Its function is as follows. Acts as a molecular chaperone for G protein-coupled receptors, regulating their biogenesis and exit from the ER. This Xenopus laevis (African clawed frog) protein is Ankyrin repeat domain-containing protein 13C-A (ankrd13c-a).